Reading from the N-terminus, the 312-residue chain is Methionyl-tRNA formyltransferase (312 aa).

109–112 (SLLP) contacts (6S)-5,6,7,8-tetrahydrofolate.

Belongs to the Fmt family.

The enzyme catalyses L-methionyl-tRNA(fMet) + (6R)-10-formyltetrahydrofolate = N-formyl-L-methionyl-tRNA(fMet) + (6S)-5,6,7,8-tetrahydrofolate + H(+). Its function is as follows. Attaches a formyl group to the free amino group of methionyl-tRNA(fMet). The formyl group appears to play a dual role in the initiator identity of N-formylmethionyl-tRNA by promoting its recognition by IF2 and preventing the misappropriation of this tRNA by the elongation apparatus. The sequence is that of Methionyl-tRNA formyltransferase from Listeria monocytogenes serotype 4a (strain HCC23).